A 1877-amino-acid chain; its full sequence is Phosphatidylinositol 4-kinase stt4 (1877 aa).

The region spanning 1305–1491 (PDSDAASSPI…KPILDRVMDK (187 aa)) is the PIK helical domain. The interval 1492-1625 (MINSLSGEDK…EVWQSAIFKV (134 aa)) is pleckstrin homology (PH) domain conferring phosphoinositide binding specificity. The 269-residue stretch at 1593-1861 (DPEELAVNGT…LIEQSYANKR (269 aa)) folds into the PI3K/PI4K catalytic domain. Positions 1599 to 1605 (VNGTEEE) are G-loop. The interval 1728–1736 (QFKDRHNGN) is catalytic loop. Residues 1747–1771 (HIDFGFIFDIAPGGITFESAPFKLT) are activation loop.

Belongs to the PI3/PI4-kinase family. Type III PI4K subfamily.

It localises to the cytoplasm. It catalyses the reaction a 1,2-diacyl-sn-glycero-3-phospho-(1D-myo-inositol) + ATP = a 1,2-diacyl-sn-glycero-3-phospho-(1D-myo-inositol 4-phosphate) + ADP + H(+). Its function is as follows. Acts on phosphatidylinositol (PI) in the first committed step in the production of the second messenger inositol 1,4,5,-trisphosphate. The chain is Phosphatidylinositol 4-kinase stt4 (stt4) from Schizosaccharomyces pombe (strain 972 / ATCC 24843) (Fission yeast).